Consider the following 142-residue polypeptide: Large ribosomal subunit protein uL23 (142 aa).

This sequence belongs to the universal ribosomal protein uL23 family.

Its function is as follows. This protein binds to a specific region on the 26S rRNA. The sequence is that of Large ribosomal subunit protein uL23 (RPL25) from Cyberlindnera jadinii (Torula yeast).